A 1115-amino-acid polypeptide reads, in one-letter code: Carbamoyl phosphate synthase large chain (1115 aa).

The carboxyphosphate synthetic domain stretch occupies residues 1–407; sequence MPRRTDLHHV…ALGKVMRSLE (407 aa). The ATP site is built by Arg134, Arg174, Gly180, Gly181, Glu213, Ile215, Glu220, Gly246, Val247, His248, Gln290, and Glu304. In terms of domain architecture, ATP-grasp 1 spans 138 to 333; sequence KDIVAKAGGE…IAKIAAKLAI (196 aa). Mg(2+) contacts are provided by Gln290, Glu304, and Asn306. Mn(2+) contacts are provided by Gln290, Glu304, and Asn306. The segment at 408 to 559 is oligomerization domain; the sequence is TTRAGFWTAP…ELDPAAETEV (152 aa). The carbamoyl phosphate synthetic domain stretch occupies residues 560 to 965; the sequence is APQTERPKVL…AFAKSQTAAY (406 aa). Residues 693-884 enclose the ATP-grasp 2 domain; sequence GDLLSAAGLP…LAKACARIML (192 aa). The ATP site is built by Arg729, Arg768, Leu770, Glu775, Gly800, Ile801, His802, Ser803, Gln843, and Glu855. Mg(2+) contacts are provided by Gln843, Glu855, and Asn857. Mn(2+) contacts are provided by Gln843, Glu855, and Asn857. The 148-residue stretch at 966–1113 folds into the MGS-like domain; sequence GSLPAQGTVF…QELHRVIGGV (148 aa). The segment at 966–1115 is allosteric domain; sequence GSLPAQGTVF…LHRVIGGVER (150 aa).

It belongs to the CarB family. Composed of two chains; the small (or glutamine) chain promotes the hydrolysis of glutamine to ammonia, which is used by the large (or ammonia) chain to synthesize carbamoyl phosphate. Tetramer of heterodimers (alpha,beta)4. It depends on Mg(2+) as a cofactor. Mn(2+) is required as a cofactor.

It catalyses the reaction hydrogencarbonate + L-glutamine + 2 ATP + H2O = carbamoyl phosphate + L-glutamate + 2 ADP + phosphate + 2 H(+). It carries out the reaction hydrogencarbonate + NH4(+) + 2 ATP = carbamoyl phosphate + 2 ADP + phosphate + 2 H(+). It participates in amino-acid biosynthesis; L-arginine biosynthesis; carbamoyl phosphate from bicarbonate: step 1/1. It functions in the pathway pyrimidine metabolism; UMP biosynthesis via de novo pathway; (S)-dihydroorotate from bicarbonate: step 1/3. Functionally, large subunit of the glutamine-dependent carbamoyl phosphate synthetase (CPSase). CPSase catalyzes the formation of carbamoyl phosphate from the ammonia moiety of glutamine, carbonate, and phosphate donated by ATP, constituting the first step of 2 biosynthetic pathways, one leading to arginine and/or urea and the other to pyrimidine nucleotides. The large subunit (synthetase) binds the substrates ammonia (free or transferred from glutamine from the small subunit), hydrogencarbonate and ATP and carries out an ATP-coupled ligase reaction, activating hydrogencarbonate by forming carboxy phosphate which reacts with ammonia to form carbamoyl phosphate. This Mycobacterium tuberculosis (strain CDC 1551 / Oshkosh) protein is Carbamoyl phosphate synthase large chain.